The following is a 387-amino-acid chain: EARP-interacting protein homolog (387 aa).

WD repeat units follow at residues 132-172 (TAHG…SKAV), 182-222 (KGQL…QIYC), 226-266 (AHGQ…DPVK), 270-310 (EHSH…SEPF), and 345-385 (EHED…KYHI).

It belongs to the WD repeat EIPR1 family.

This chain is EARP-interacting protein homolog, found in Gekko japonicus (Schlegel's Japanese gecko).